Reading from the N-terminus, the 117-residue chain is Large ribosomal subunit protein uL22c (117 aa).

It belongs to the universal ribosomal protein uL22 family. As to quaternary structure, part of the 50S ribosomal subunit.

It is found in the plastid. The protein localises to the chloroplast. In terms of biological role, this protein binds specifically to 23S rRNA. The globular domain of the protein is located near the polypeptide exit tunnel on the outside of the subunit, while an extended beta-hairpin is found that lines the wall of the exit tunnel in the center of the 70S ribosome. The protein is Large ribosomal subunit protein uL22c (rpl22) of Pyropia yezoensis (Susabi-nori).